The sequence spans 119 residues: Large ribosomal subunit protein uL18 (119 aa).

It belongs to the universal ribosomal protein uL18 family. As to quaternary structure, part of the 50S ribosomal subunit; part of the 5S rRNA/L5/L18/L25 subcomplex. Contacts the 5S and 23S rRNAs.

Its function is as follows. This is one of the proteins that bind and probably mediate the attachment of the 5S RNA into the large ribosomal subunit, where it forms part of the central protuberance. The chain is Large ribosomal subunit protein uL18 from Ruegeria pomeroyi (strain ATCC 700808 / DSM 15171 / DSS-3) (Silicibacter pomeroyi).